The sequence spans 135 residues: Large ribosomal subunit protein mL41 (135 aa).

Residues 1–13 (MGVLSALARGFVR) constitute a mitochondrion transit peptide.

This sequence belongs to the mitochondrion-specific ribosomal protein mL41 family. In terms of assembly, component of the mitochondrial ribosome large subunit (39S) which comprises a 16S rRNA and about 50 distinct proteins.

The protein localises to the mitochondrion. Its function is as follows. Component of the mitochondrial ribosome large subunit. Also involved in apoptosis and cell cycle. This chain is Large ribosomal subunit protein mL41 (mrpl41), found in Danio rerio (Zebrafish).